Here is a 348-residue protein sequence, read N- to C-terminus: Spermidine/putrescine-binding periplasmic protein (348 aa).

The first 23 residues, 1-23 (MKKWSRHLLAAGALALGMSAAHA), serve as a signal peptide directing secretion. Residues glutamate 36, tyrosine 85, 168-171 (DARE), and glutamine 327 each bind spermidine.

This sequence belongs to the bacterial solute-binding protein PotD/PotF family.

The protein localises to the periplasm. Required for the activity of the bacterial periplasmic transport system of putrescine and spermidine. Polyamine binding protein. The polypeptide is Spermidine/putrescine-binding periplasmic protein (potD) (Escherichia coli (strain K12)).